The sequence spans 430 residues: MSAFGNPFTSGAKPNLSNTSGINPFTNNAASTNNMGGSAFGRPSFGTANTMTGGTTTSAFGMPQFGTNTGNTGNTSISAFGNTSNAAKPSAFGAPAFGSSAPINVNPPSTTSAFGAPSFGSTGFGAMAATSNPFGKSPGSMGSAFGQPAFGANKTAIPSSSVSNSNNSAFGAASNTPLTTTSPFGSLQQNASQNASSTSSAFGKPTFGAATNTQSPFGTIQNTSTSSGTGVSPFGTFGTNSNNKSPFSNLQSGAGAGSSPFGTTTSKANNNNNVGSSAFGTTNNQSPFSGGSGGTFGSASNLNKNTNGNFQSSFGNKGFSFGITPQNDANKVSQSNPSFGQTMPNTDPNISLKSNGNATSFGFGQQQMNATNVNANTATGKIRFVQGLSSEKDGILELADLAEETLKIFRANKFELGLVPDIPPPPALVA.

Positions 1 to 68 (MSAFGNPFTS…AFGMPQFGTN (68 aa)) are disordered. An SXFG 1 repeat occupies 2–5 (SAFG). The segment covering 15–36 (NLSNTSGINPFTNNAASTNNMG) has biased composition (polar residues). SAFGXPXFG repeat units follow at residues 38–46 (SAFGRPSFG) and 58–66 (SAFGMPQFG). A compositionally biased stretch (low complexity) spans 45 to 68 (FGTANTMTGGTTTSAFGMPQFGTN). One copy of the SXFG 2 repeat lies at 78–81 (SAFG). SAFGXPXFG repeat units follow at residues 90 to 98 (SAFGAPAFG) and 112 to 120 (SAFGAPSFG). An interactions with CRM1 and GFD1 region spans residues 121-230 (STGFGAMAAT…QNTSTSSGTG (110 aa)). FG repeat units follow at residues 124–125 (FG) and 134–135 (FG). The residue at position 137 (S137) is a Phosphoserine. The stretch at 143-151 (SAFGQPAFG) is one SAFGXPXFG 5 repeat. 2 SXFG repeats span residues 168-171 (SAFG) and 182-185 (SPFG). Positions 180-294 (TTSPFGSLQQ…QSPFSGGSGG (115 aa)) are disordered. A compositionally biased stretch (low complexity) spans 186 to 201 (SLQQNASQNASSTSSA). The stretch at 200 to 208 (SAFGKPTFG) is one SAFGXPXFG 6 repeat. Residues 209–230 (AATNTQSPFGTIQNTSTSSGTG) are compositionally biased toward polar residues. 2 SXFG repeats span residues 215–218 (SPFG) and 232–235 (SPFG). Polar residues-rich tracts occupy residues 237-252 (FGTNSNNKSPFSNLQS) and 260-285 (PFGTTTSKANNNNNVGSSAFGTTNNQ). SXFG repeat units lie at residues 259–262 (SPFG) and 277–280 (SAFG). One copy of the FG 3 repeat lies at 296-297 (FG). S298 carries the phosphoserine modification. Residues 312 to 315 (SSFG) form an SXFG 9 repeat. 3 FG repeats span residues 319-322 (FSFG), 339-340 (FG), and 361-364 (FGFG). Residues 319–346 (FSFGITPQNDANKVSQSNPSFGQTMPNT) form a disordered region. Over residues 323-346 (ITPQNDANKVSQSNPSFGQTMPNT) the composition is skewed to polar residues. The segment at 365-430 (QQQMNATNVN…DIPPPPALVA (66 aa)) is interaction with GLE1.

As to quaternary structure, component of the nuclear pore complex (NPC). NPC constitutes the exclusive means of nucleocytoplasmic transport. NPCs allow the passive diffusion of ions and small molecules and the active, nuclear transport receptor-mediated bidirectional transport of macromolecules such as proteins, RNAs, ribonucleoparticles (RNPs), and ribosomal subunits across the nuclear envelope. Due to its 8-fold rotational symmetry, all subunits are present with 8 copies or multiples thereof. NUP42 interacts with the NUP82 subcomplex. It interacts directly with GLE1, and through its FG repeats with GFD1, the heterodimeric mRNA transport factor MEX67/MTR2, and the karyopherin CRM1.

The protein localises to the nucleus. The protein resides in the nuclear pore complex. Its subcellular location is the nucleus membrane. Functionally, functions as a component of the nuclear pore complex (NPC). NPC components, collectively referred to as nucleoporins (NUPs), can play the role of both NPC structural components and of docking or interaction partners for transiently associated nuclear transport factors. Active directional transport is assured by both, a Phe-Gly (FG) repeat affinity gradient for these transport factors across the NPC and a transport cofactor concentration gradient across the nuclear envelope (GSP1 and GSP2 GTPases associated predominantly with GTP in the nucleus, with GDP in the cytoplasm). NUP42 is specifically important for nuclear protein and mRNA export. The chain is Nucleoporin NUP42 (NUP42) from Saccharomyces cerevisiae (strain ATCC 204508 / S288c) (Baker's yeast).